The sequence spans 242 residues: 6-phosphogluconolactonase (242 aa).

It belongs to the glucosamine/galactosamine-6-phosphate isomerase family. 6-phosphogluconolactonase subfamily.

It carries out the reaction 6-phospho-D-glucono-1,5-lactone + H2O = 6-phospho-D-gluconate + H(+). It functions in the pathway carbohydrate degradation; pentose phosphate pathway; D-ribulose 5-phosphate from D-glucose 6-phosphate (oxidative stage): step 2/3. Functionally, hydrolysis of 6-phosphogluconolactone to 6-phosphogluconate. In Pseudomonas putida (Arthrobacter siderocapsulatus), this protein is 6-phosphogluconolactonase (pgl).